A 365-amino-acid polypeptide reads, in one-letter code: Succinyl-diaminopimelate desuccinylase (365 aa).

His-65 is a binding site for Zn(2+). The active site involves Asp-67. Asp-96 contributes to the Zn(2+) binding site. The Proton acceptor role is filled by Glu-126. The Zn(2+) site is built by Glu-127, Glu-155, and His-340.

This sequence belongs to the peptidase M20A family. DapE subfamily. Homodimer. Zn(2+) is required as a cofactor. Requires Co(2+) as cofactor.

It carries out the reaction N-succinyl-(2S,6S)-2,6-diaminopimelate + H2O = (2S,6S)-2,6-diaminopimelate + succinate. It participates in amino-acid biosynthesis; L-lysine biosynthesis via DAP pathway; LL-2,6-diaminopimelate from (S)-tetrahydrodipicolinate (succinylase route): step 3/3. Functionally, catalyzes the hydrolysis of N-succinyl-L,L-diaminopimelic acid (SDAP), forming succinate and LL-2,6-diaminopimelate (DAP), an intermediate involved in the bacterial biosynthesis of lysine and meso-diaminopimelic acid, an essential component of bacterial cell walls. This chain is Succinyl-diaminopimelate desuccinylase, found in Campylobacter jejuni subsp. doylei (strain ATCC BAA-1458 / RM4099 / 269.97).